The primary structure comprises 343 residues: Ribonucleoside-diphosphate reductase small subunit (343 aa).

Positions 101, 131, and 134 each coordinate Fe cation. The active site involves Tyr138. A helical membrane pass occupies residues 188 to 208; that stretch reads ILMILIEGIFFSASFAAIAYL. Residues Glu194, Glu228, and His231 each coordinate Fe cation.

This sequence belongs to the ribonucleoside diphosphate reductase small chain family. As to quaternary structure, heterotetramer composed of a homodimer of the large subunit (R1) and a homodimer of the small subunit (R2). Larger multisubunit protein complex are also active, composed of (R1)n(R2)n. The cofactor is Fe cation.

The protein resides in the host membrane. It catalyses the reaction a 2'-deoxyribonucleoside 5'-diphosphate + [thioredoxin]-disulfide + H2O = a ribonucleoside 5'-diphosphate + [thioredoxin]-dithiol. In terms of biological role, ribonucleoside-diphosphate reductase holoenzyme provides the precursors necessary for viral DNA synthesis. Allows virus growth in non-dividing cells, as well as reactivation from latency in infected hosts. Catalyzes the biosynthesis of deoxyribonucleotides from the corresponding ribonucleotides. In Gallid herpesvirus 2 (strain Chicken/Md5/ATCC VR-987) (GaHV-2), this protein is Ribonucleoside-diphosphate reductase small subunit.